Consider the following 182-residue polypeptide: uncharacterized protein (182 aa).

Residues 36-164 (LRHRATYIVV…TPDSLKALSL (129 aa)) enclose the Nudix hydrolase domain. The Nudix box signature appears at 73 to 95 (GGVVQSGENYLESARREAEEELG). Residues E89 and E93 each contribute to the Mg(2+) site.

This sequence belongs to the Nudix hydrolase family. Mg(2+) serves as cofactor.

This is an uncharacterized protein from Yersinia pestis.